Here is a 363-residue protein sequence, read N- to C-terminus: 5-hydroxytryptamine receptor 1E (363 aa).

At 1–21 the chain is on the extracellular side; sequence MNITNCTTEASMAIRPKTITE. N-linked (GlcNAc...) asparagine glycans are attached at residues Asn-2 and Asn-5. Residues 22–45 form a helical membrane-spanning segment; the sequence is KMLICMTLVVITTLTTLLNLAVIM. The Cytoplasmic portion of the chain corresponds to 46–59; that stretch reads AIGTTKKLHQPANY. A helical membrane pass occupies residues 60–84; sequence LICSLAVTDLLVAVLVMPLSIIYIV. Residues 85–92 lie on the Extracellular side of the membrane; it reads MDRWKLGY. A helical membrane pass occupies residues 93-118; that stretch reads FLCEVWLSVDMTCCTCSILHLCVIAL. An intrachain disulfide couples Cys-95 to Cys-173. Asp-102 and Cys-106 together coordinate serotonin. The DRY motif; important for ligand-induced conformation changes signature appears at 119–121; it reads DRY. Over 119–138 the chain is Cytoplasmic; that stretch reads DRYWAITNAIEYARKRTAKR. The chain crosses the membrane as a helical span at residues 139 to 157; it reads AALMILTVWTISIFISMPP. The Extracellular portion of the chain corresponds to 158-179; sequence LFWRSHRRLSPPPSQCTIQHDH. A helical transmembrane segment spans residues 180–203; it reads VIYTIYSTLGAFYIPLTLILILYY. At 204–291 the chain is on the cytoplasmic side; that stretch reads RIYHAAKSLY…SSTRERKAAR (88 aa). A helical transmembrane segment spans residues 292–316; sequence ILGLILGAFILSWLPFFIKELIVGL. At 317–322 the chain is on the extracellular side; the sequence is SIYTVS. Residues 323 to 345 traverse the membrane as a helical segment; it reads SEVADFLTWLGYVNSLINPLLYT. The NPxxY motif; important for ligand-induced conformation changes and signaling motif lies at 340–344; the sequence is NPLLY. The Cytoplasmic portion of the chain corresponds to 346–363; sequence SFNEDFKLAFKKLIRCRE.

The protein belongs to the G-protein coupled receptor 1 family.

It is found in the cell membrane. G-protein coupled receptor for 5-hydroxytryptamine (serotonin). Also functions as a receptor for various alkaloids and psychoactive substances. Ligand binding causes a conformation change that triggers signaling via guanine nucleotide-binding proteins (G proteins) and modulates the activity of downstream effectors, such as adenylate cyclase. HTR1E is coupled to G(i)/G(o) G alpha proteins and mediates inhibitory neurotransmission by inhibiting adenylate cyclase activity. The chain is 5-hydroxytryptamine receptor 1E (HTR1E) from Pan troglodytes (Chimpanzee).